Here is a 224-residue protein sequence, read N- to C-terminus: 4'-phosphopantetheinyl transferase (224 aa).

Mg(2+) is bound by residues Asp-107, Glu-109, and Glu-151. The interval 158 to 189 (GKGLSLPLDSFSVRLKDDGHVSIELPDGHEPC) is peptidyl carrier protein binding.

Belongs to the P-Pant transferase superfamily. Gsp/Sfp/HetI/AcpT family. It depends on Mg(2+) as a cofactor.

It catalyses the reaction apo-[peptidyl-carrier protein] + CoA = holo-[peptidyl-carrier protein] + adenosine 3',5'-bisphosphate + H(+). May activate the peptidyl carrier protein (PCP) domains of surfactin synthetase SRF1/2/3 and iturin A synthetase, by transferring the 4'-phosphopantetheinyl moiety of coenzyme A (CoA) to a serine residue. Required for the coproduction of the lipopeptide antibiotics, iturin A and surfactin. This Bacillus subtilis protein is 4'-phosphopantetheinyl transferase (lpa-14).